Consider the following 108-residue polypeptide: Replication restart protein PriB (108 aa).

The 101-residue stretch at 8 to 108 (VDNRFSLIGK…LHAEQIEFIE (101 aa)) folds into the SSB domain.

Belongs to the PriB family. As to quaternary structure, homodimer. Interacts with PriA and DnaT. Component of the replication restart primosome. Primosome assembly occurs via a 'hand-off' mechanism. PriA binds to replication forks, subsequently PriB then DnaT bind; DnaT then displaces ssDNA to generate the helicase loading substrate.

Involved in the restart of stalled replication forks, which reloads the replicative helicase on sites other than the origin of replication; the PriA-PriB pathway is the major replication restart pathway. During primosome assembly it facilitates complex formation between PriA and DnaT on DNA; stabilizes PriA on DNA. Stimulates the DNA unwinding activity of PriA helicase. The sequence is that of Replication restart protein PriB from Histophilus somni (strain 2336) (Haemophilus somnus).